Here is a 263-residue protein sequence, read N- to C-terminus: MLILLSPAKNMNFDAVGRDLLATTPDLIGETRILSKTTRQLTAPKIKAMMKINDDLARLNRERFQAFDADQPGVKQAAFAFNGEVYRGLEAHTLSAEDLDWAQSHLRILSGMYGALKPLDAIHPYRLEMGRKLHTRRGESLYDFWGDRIAKELNGLQAEAAEPVILNLASNEYFKAVDRKALKGRVITATFKEEKDGQLRALMVFAKKARGMMARWAIENRITDPADLVKFDLGGYRFEAEGSSEGDLLFTRPQPAAAGKKAA.

The protein belongs to the UPF0246 family.

The sequence is that of UPF0246 protein Mmar10_0828 from Maricaulis maris (strain MCS10) (Caulobacter maris).